Consider the following 348-residue polypeptide: D-alanine--D-alanine ligase (348 aa).

The 203-residue stretch at 132-334 folds into the ATP-grasp domain; it reads KRVLESIGIP…YPDLIEELVT (203 aa). 162–217 contributes to the ATP binding site; sequence LARLTFPIFVKPANMGSSVGISKAQTKVELRKAIQLALTYDSRVLIEQGVVAREIE. 3 residues coordinate Mg(2+): Asp-288, Glu-301, and Asn-303.

This sequence belongs to the D-alanine--D-alanine ligase family. Mg(2+) serves as cofactor. Requires Mn(2+) as cofactor.

Its subcellular location is the cytoplasm. It catalyses the reaction 2 D-alanine + ATP = D-alanyl-D-alanine + ADP + phosphate + H(+). The protein operates within cell wall biogenesis; peptidoglycan biosynthesis. In terms of biological role, cell wall formation. This is D-alanine--D-alanine ligase from Streptococcus pyogenes serotype M3 (strain SSI-1).